The sequence spans 362 residues: Glutamate 5-kinase (362 aa).

Position 3 (Lys3) interacts with ATP. Residues Ser43, Asp128, and Asn140 each coordinate substrate. ATP is bound by residues 160–161 (TD) and 202–208 (TGGMRTK). The PUA domain occupies 267–348 (PGTILIDAGA…REIEPILGYS (82 aa)).

Belongs to the glutamate 5-kinase family.

Its subcellular location is the cytoplasm. It carries out the reaction L-glutamate + ATP = L-glutamyl 5-phosphate + ADP. Its pathway is amino-acid biosynthesis; L-proline biosynthesis; L-glutamate 5-semialdehyde from L-glutamate: step 1/2. Its function is as follows. Catalyzes the transfer of a phosphate group to glutamate to form L-glutamate 5-phosphate. This is Glutamate 5-kinase from Xanthomonas campestris pv. campestris (strain 8004).